We begin with the raw amino-acid sequence, 386 residues long: ORC1-type DNA replication protein 3 (386 aa).

ATP-binding positions include 65–69 and Tyr-206; that span reads TGKTF.

This sequence belongs to the CDC6/cdc18 family.

Involved in regulation of DNA replication. This Sulfurisphaera tokodaii (strain DSM 16993 / JCM 10545 / NBRC 100140 / 7) (Sulfolobus tokodaii) protein is ORC1-type DNA replication protein 3 (cdc6-3).